Here is a 501-residue protein sequence, read N- to C-terminus: Cytochrome P450 monooxygenase 76AD131 (501 aa).

The chain crosses the membrane as a helical span at residues methionine 1–leucine 21. Residues asparagine 115 and asparagine 264 are each glycosylated (N-linked (GlcNAc...) asparagine). Position 444 (cysteine 444) interacts with heme.

It belongs to the cytochrome P450 family. It depends on heme as a cofactor. In terms of tissue distribution, highly expressed in aerial parts, in both skin and flesh tissues.

The protein resides in the membrane. It carries out the reaction tyramine + reduced [NADPH--hemoprotein reductase] + O2 = dopamine + oxidized [NADPH--hemoprotein reductase] + H2O + H(+). The catalysed reaction is 3-methoxytyramine + reduced [NADPH--hemoprotein reductase] + O2 = 3,4-dihydroxy-5-methoxyphenethylamine + oxidized [NADPH--hemoprotein reductase] + H2O + H(+). It functions in the pathway aromatic compound metabolism. Its pathway is alkaloid biosynthesis. Functionally, cytochrome P450 monooxygenase participating in the biosynthesis of natural products derived from phenylethylamine, including mescaline, a natural hallucinogen potentially used in psychotherapeutic treatments. Catalyzes the hydroxylation of tyramine to dopamine and of 3-methoxytyramine to 3,4-dihydroxy-5-methoxyphenethylamine. The chain is Cytochrome P450 monooxygenase 76AD131 from Lophophora williamsii (Peyote).